The primary structure comprises 421 residues: Adenosylhomocysteinase (421 aa).

Substrate contacts are provided by Asp-128 and Glu-153. 154–156 serves as a coordination point for NAD(+); that stretch reads TTT. 2 residues coordinate substrate: Lys-183 and Asp-187. Residues Asn-188, 217–222, Glu-240, 296–298, and Asn-343 contribute to the NAD(+) site; these read GYGWCG and AGH.

Belongs to the adenosylhomocysteinase family. Requires NAD(+) as cofactor.

It is found in the cytoplasm. It carries out the reaction S-adenosyl-L-homocysteine + H2O = L-homocysteine + adenosine. It functions in the pathway amino-acid biosynthesis; L-homocysteine biosynthesis; L-homocysteine from S-adenosyl-L-homocysteine: step 1/1. Functionally, may play a key role in the regulation of the intracellular concentration of adenosylhomocysteine. The polypeptide is Adenosylhomocysteinase (Thermococcus kodakarensis (strain ATCC BAA-918 / JCM 12380 / KOD1) (Pyrococcus kodakaraensis (strain KOD1))).